We begin with the raw amino-acid sequence, 350 residues long: Ion-translocating oxidoreductase complex subunit D (350 aa).

Helical transmembrane passes span 37-57 (YYFGYGTLVQLLLAITVAYLA), 78-109 (ALVTASLLAVAIPPLAPWWLIVIGTLFAIVIV), 124-144 (AMAAYVLLLISFPVQMTSWVA), and 158-178 (TFNSIFQLNAGYAADFFHLAI). Residue Thr-185 is modified to FMN phosphoryl threonine. The next 5 membrane-spanning stretches (helical) occupy residues 212 to 232 (SVGEGWFWVNMAYLVGGLVML), 239 to 259 (WHISGAIVLTLFVCASIGFLI), 264 to 284 (FVSPIMHLFSGGTMLAAFFIA), 298 to 318 (LIFGAMIGLLIYLIRTFGGYP), and 319 to 339 (DAVAFAVLLANMCAPFIDYYV).

The protein belongs to the NqrB/RnfD family. In terms of assembly, the complex is composed of six subunits: RnfA, RnfB, RnfC, RnfD, RnfE and RnfG. The cofactor is FMN.

The protein resides in the cell inner membrane. Its function is as follows. Part of a membrane-bound complex that couples electron transfer with translocation of ions across the membrane. The polypeptide is Ion-translocating oxidoreductase complex subunit D (Shewanella frigidimarina (strain NCIMB 400)).